Consider the following 116-residue polypeptide: NADH-quinone oxidoreductase subunit A (116 aa).

3 consecutive transmembrane segments (helical) span residues 3 to 23, 61 to 81, and 85 to 105; these read FTLL…ALGI, FAIL…WAVV, and LGVY…LGLA.

The protein belongs to the complex I subunit 3 family. NDH-1 is composed of 14 different subunits. Subunits NuoA, H, J, K, L, M, N constitute the membrane sector of the complex.

It is found in the cell inner membrane. It carries out the reaction a quinone + NADH + 5 H(+)(in) = a quinol + NAD(+) + 4 H(+)(out). Its function is as follows. NDH-1 shuttles electrons from NADH, via FMN and iron-sulfur (Fe-S) centers, to quinones in the respiratory chain. The immediate electron acceptor for the enzyme in this species is believed to be a menaquinone. Couples the redox reaction to proton translocation (for every two electrons transferred, four hydrogen ions are translocated across the cytoplasmic membrane), and thus conserves the redox energy in a proton gradient. The protein is NADH-quinone oxidoreductase subunit A of Phocaeicola vulgatus (strain ATCC 8482 / DSM 1447 / JCM 5826 / CCUG 4940 / NBRC 14291 / NCTC 11154) (Bacteroides vulgatus).